A 499-amino-acid polypeptide reads, in one-letter code: Probable mitochondrial-processing peptidase subunit alpha-2, chloroplastic/mitochondrial (499 aa).

The protein belongs to the peptidase M16 family. In terms of assembly, heterodimer of alpha and beta subunits, forming the mitochondrial processing protease (MPP) in which subunit alpha is involved in substrate recognition and binding and subunit beta is the catalytic subunit. Component of the ubiquinol-cytochrome c oxidoreductase (cytochrome b-c1 complex, complex III, CIII), a multisubunit enzyme composed of 10 subunits. The complex is composed of 3 respiratory subunits cytochrome b (MT-CYB), cytochrome c1 (CYC1-1 or CYC1-2) and Rieske protein (UCR1-1 or UCR1-2), 2 core protein subunits MPPalpha1 (or MPPalpha2) and MPPB, and 5 low-molecular weight protein subunits QCR7-1 (or QCR7-2), UCRQ-1 (or UCRQ-2), QCR9, UCRY and probably QCR6-1 (or QCR6-2). The complex exists as an obligatory dimer and forms supercomplexes (SCs) in the inner mitochondrial membrane with NADH-ubiquinone oxidoreductase (complex I, CI), resulting in different assemblies (supercomplexes SCI(1)III(2) and SCI(2)III(4)). Interacts with TIM23-2.

It localises to the plastid. It is found in the chloroplast stroma. The protein resides in the mitochondrion matrix. The protein localises to the mitochondrion inner membrane. Substrate recognition and binding subunit of the essential mitochondrial processing protease (MPP), which cleaves the mitochondrial sequence off newly imported precursors proteins. Its function is as follows. Component of the ubiquinol-cytochrome c oxidoreductase, a multisubunit transmembrane complex that is part of the mitochondrial electron transport chain which drives oxidative phosphorylation. The respiratory chain contains 3 multisubunit complexes succinate dehydrogenase (complex II, CII), ubiquinol-cytochrome c oxidoreductase (cytochrome b-c1 complex, complex III, CIII) and cytochrome c oxidase (complex IV, CIV), that cooperate to transfer electrons derived from NADH and succinate to molecular oxygen, creating an electrochemical gradient over the inner membrane that drives transmembrane transport and the ATP synthase. The cytochrome b-c1 complex catalyzes electron transfer from ubiquinol to cytochrome c, linking this redox reaction to translocation of protons across the mitochondrial inner membrane, with protons being carried across the membrane as hydrogens on the quinol. In the process called Q cycle, 2 protons are consumed from the matrix, 4 protons are released into the intermembrane space and 2 electrons are passed to cytochrome c. This chain is Probable mitochondrial-processing peptidase subunit alpha-2, chloroplastic/mitochondrial (MPPalpha2), found in Arabidopsis thaliana (Mouse-ear cress).